Here is a 115-residue protein sequence, read N- to C-terminus: Probable non-functional immunoglobulin heavy variable 8-51-1 (115 aa).

Positions 1–17 are cleaved as a signal peptide; sequence MLVCVLLYSFRLFGIQG. The interval 18–42 is framework-1; that stretch reads EAQLTESGGDLVHLEGPLRLSCAAS. Residues 19 to 115 enclose the Ig-like domain; that stretch reads AQLTESGGDL…QNMAAFNCAG (97 aa). A complementarity-determining-1 region spans residues 43–50; that stretch reads WFTFSIYE. A framework-2 region spans residues 51 to 67; the sequence is IHWVCQASGKGLEWVAV. A disulfide bridge connects residues cysteine 55 and cysteine 113. Residues 68-75 are complementarity-determining-2; that stretch reads IWRGESHQ. Residues 76-113 are framework-3; the sequence is YNADYVRGRLTTSRDNTKYMLYMQMISLRTQNMAAFNC. A complementarity-determining-3 region spans residues 114 to 115; the sequence is AG.

Immunoglobulins are composed of two identical heavy chains and two identical light chains; disulfide-linked.

Its subcellular location is the secreted. It is found in the cell membrane. In terms of biological role, probable non-functional open reading frame (ORF) of V region of the variable domain of immunoglobulin heavy chains. Non-functional ORF generally cannot participate in the synthesis of a productive immunoglobulin chain due to altered V-(D)-J or switch recombination and/or splicing site (at mRNA level) and/or conserved amino acid change (protein level). Immunoglobulins, also known as antibodies, are membrane-bound or secreted glycoproteins produced by B lymphocytes. In the recognition phase of humoral immunity, the membrane-bound immunoglobulins serve as receptors which, upon binding of a specific antigen, trigger the clonal expansion and differentiation of B lymphocytes into immunoglobulins-secreting plasma cells. Secreted immunoglobulins mediate the effector phase of humoral immunity, which results in the elimination of bound antigens. The antigen binding site is formed by the variable domain of one heavy chain, together with that of its associated light chain. Thus, each immunoglobulin has two antigen binding sites with remarkable affinity for a particular antigen. The variable domains are assembled by a process called V-(D)-J rearrangement and can then be subjected to somatic hypermutations which, after exposure to antigen and selection, allow affinity maturation for a particular antigen. This Homo sapiens (Human) protein is Probable non-functional immunoglobulin heavy variable 8-51-1.